The chain runs to 549 residues: MGSRNSSSAGSGSLEPSEGLSRRGTGLRRSEEEEEEDEDVDLAQVLAYLLRRGQVRLVQGRGAANLQLIQALSDSEEEHDSAWDGRLGDRYNPPVDATPDTRELEYNEIKTQVGLATGRLGLRRTALQQSFPQMLHQRERGLCHRGSFSLGEQSRVMSHFLPNDLSFTDTYSQKAFCGIYSKDGQIFMSACQDQTIRLYDCRYGRFHKFKSIKARDVGWSVLDVAFTPDGNHFLYSSWSDYIHICNIYGEGDTHTALDLRPDERRFAVFSIAVSSDGREVLGGANDGCLYVFDREQNRRTLQIESHEDDVNAVAFADISSQILFSGGDDAICKVWDRRTMREDDPKPVGALAGHQDGITFIDSKGDARYLISNSKDQTIKLWDIRRFSSREGMEASRLAATQQNWDYRWQQVPKIAWKKLKLPGDSSLMTYRGHGVLHTLIRCRFSPAHSTGQQFIYSGCSTGKVVVYDLLSGHIVKKLTNHKACVRDVSWHPFEEKIVSSSWDGNLRLWQYRQAEYFQDDMPESDMNRVCSSGPTPVPCPSVAFSSPQ.

Residues 1–24 show a composition bias toward low complexity; the sequence is MGSRNSSSAGSGSLEPSEGLSRRG. The disordered stretch occupies residues 1–40; sequence MGSRNSSSAGSGSLEPSEGLSRRGTGLRRSEEEEEEDEDV. 2 positions are modified to phosphoserine: S73 and S75. WD repeat units follow at residues 170–210, 216–258, 263–302, 305–345, 353–392, 435–480, and 481–520; these read TYSQ…HKFK, DVGW…TALD, ERRF…RTLQ, SHED…EDDP, GHQD…SREG, GVLH…KKLT, and NHKA…YFQD.

As to quaternary structure, interacts with DDB1 and CUL4A.

It participates in protein modification; protein ubiquitination. Functionally, may function as a substrate receptor for CUL4-DDB1 E3 ubiquitin-protein ligase complex. The sequence is that of DDB1- and CUL4-associated factor 11 (Dcaf11) from Mus musculus (Mouse).